A 270-amino-acid chain; its full sequence is 4-hydroxy-tetrahydrodipicolinate reductase (270 aa).

NAD(+)-binding positions include 9–14 (GAGGRM) and E35. Residue R36 participates in NADP(+) binding. Residues 99 to 101 (GTT) and 123 to 126 (ASNY) each bind NAD(+). Residue H156 is the Proton donor/acceptor of the active site. H157 is a (S)-2,3,4,5-tetrahydrodipicolinate binding site. K160 acts as the Proton donor in catalysis. (S)-2,3,4,5-tetrahydrodipicolinate is bound at residue 166–167 (GT).

The protein belongs to the DapB family.

The protein localises to the cytoplasm. The catalysed reaction is (S)-2,3,4,5-tetrahydrodipicolinate + NAD(+) + H2O = (2S,4S)-4-hydroxy-2,3,4,5-tetrahydrodipicolinate + NADH + H(+). The enzyme catalyses (S)-2,3,4,5-tetrahydrodipicolinate + NADP(+) + H2O = (2S,4S)-4-hydroxy-2,3,4,5-tetrahydrodipicolinate + NADPH + H(+). Its pathway is amino-acid biosynthesis; L-lysine biosynthesis via DAP pathway; (S)-tetrahydrodipicolinate from L-aspartate: step 4/4. In terms of biological role, catalyzes the conversion of 4-hydroxy-tetrahydrodipicolinate (HTPA) to tetrahydrodipicolinate. This chain is 4-hydroxy-tetrahydrodipicolinate reductase, found in Histophilus somni (strain 129Pt) (Haemophilus somnus).